A 154-amino-acid polypeptide reads, in one-letter code: S-ribosylhomocysteine lyase (154 aa).

Positions 58, 62, and 125 each coordinate Fe cation.

The protein belongs to the LuxS family. As to quaternary structure, homodimer. Fe cation serves as cofactor.

The enzyme catalyses S-(5-deoxy-D-ribos-5-yl)-L-homocysteine = (S)-4,5-dihydroxypentane-2,3-dione + L-homocysteine. Functionally, involved in the synthesis of autoinducer 2 (AI-2) which is secreted by bacteria and is used to communicate both the cell density and the metabolic potential of the environment. The regulation of gene expression in response to changes in cell density is called quorum sensing. Catalyzes the transformation of S-ribosylhomocysteine (RHC) to homocysteine (HC) and 4,5-dihydroxy-2,3-pentadione (DPD). The polypeptide is S-ribosylhomocysteine lyase (Dichelobacter nodosus (strain VCS1703A)).